The chain runs to 312 residues: Malate dehydrogenase (312 aa).

Residues 7–13 (GAAGGIG) and aspartate 34 each bind NAD(+). 2 residues coordinate substrate: arginine 81 and arginine 87. NAD(+) is bound by residues asparagine 94 and 117-119 (ITN). 2 residues coordinate substrate: asparagine 119 and arginine 153. Catalysis depends on histidine 177, which acts as the Proton acceptor. Methionine 227 lines the NAD(+) pocket.

This sequence belongs to the LDH/MDH superfamily. MDH type 1 family. Homodimer.

It catalyses the reaction (S)-malate + NAD(+) = oxaloacetate + NADH + H(+). Its function is as follows. Catalyzes the reversible oxidation of malate to oxaloacetate. This Moritella marina (Vibrio marinus) protein is Malate dehydrogenase.